A 347-amino-acid polypeptide reads, in one-letter code: Very-long-chain 3-oxoacyl-CoA reductase (347 aa).

Residues 22–42 (LLWSIFGFGVLKATTLILRIM) form a helical membrane-spanning segment. V68, D122, N149, Y223, K227, V256, and S258 together coordinate NADP(+). The Proton donor role is filled by Y223. K227 functions as the Lowers pKa of active site Tyr in the catalytic mechanism.

Belongs to the short-chain dehydrogenases/reductases (SDR) family.

It localises to the endoplasmic reticulum membrane. It catalyses the reaction a very-long-chain (3R)-3-hydroxyacyl-CoA + NADP(+) = a very-long-chain 3-oxoacyl-CoA + NADPH + H(+). The protein operates within lipid metabolism; fatty acid biosynthesis. Its function is as follows. Component of the microsomal membrane bound fatty acid elongation system, which produces the 26-carbon very long-chain fatty acids (VLCFA) from palmitate. Catalyzes the reduction of the 3-ketoacyl-CoA intermediate that is formed in each cycle of fatty acid elongation. VLCFAs serve as precursors for ceramide and sphingolipids. This Vanderwaltozyma polyspora (strain ATCC 22028 / DSM 70294 / BCRC 21397 / CBS 2163 / NBRC 10782 / NRRL Y-8283 / UCD 57-17) (Kluyveromyces polysporus) protein is Very-long-chain 3-oxoacyl-CoA reductase.